A 579-amino-acid polypeptide reads, in one-letter code: Nif-specific regulatory protein (579 aa).

The region spanning 40–187 (DPVAEVPQIF…MVASLLEQAL (148 aa)) is the GAF domain. The 229-residue stretch at 226–454 (IVGSSPAIAE…LENCVNRAAA (229 aa)) folds into the Sigma-54 factor interaction domain. ATP-binding positions include 254 to 261 (GESGTGKE) and 317 to 326 (ADGGTLFLDE). The inter-domain linker stretch occupies residues 464–536 (EELACRQGAC…PLRTKTAQLS (73 aa)). C468 and C473 together coordinate a divalent metal cation. A disordered region spans residues 502 to 529 (RVSAPPPEPAPAPEPAPEAPPREEVPLR). Tandem repeats lie at residues 505–506 (AP), 507–508 (PP), 509–510 (EP), 511–512 (AP), 513–514 (AP), 515–516 (EP), and 517–518 (AP). The interval 505–518 (APPPEPAPAPEPAP) is 7 X 2 AA tandem repeats of X-P. A compositionally biased stretch (pro residues) spans 505–520 (APPPEPAPAPEPAPEA). Positions 537–579 (REELLRALESAGWVQAKAARLLGMTPRQIAYALQKFEIELRKI) are C-terminal DNA-binding domain. Residues 551–570 (QAKAARLLGMTPRQIAYALQ) constitute a DNA-binding region (H-T-H motif).

As to quaternary structure, interacts with sigma-54.

Its function is as follows. Required for activation of most nif operons, which are directly involved in nitrogen fixation. The polypeptide is Nif-specific regulatory protein (nifA1) (Rhodobacter capsulatus (strain ATCC BAA-309 / NBRC 16581 / SB1003)).